Here is a 282-residue protein sequence, read N- to C-terminus: Bifunctional protein FolD (282 aa).

NADP(+)-binding positions include G165–S167 and S190.

This sequence belongs to the tetrahydrofolate dehydrogenase/cyclohydrolase family. As to quaternary structure, homodimer.

The enzyme catalyses (6R)-5,10-methylene-5,6,7,8-tetrahydrofolate + NADP(+) = (6R)-5,10-methenyltetrahydrofolate + NADPH. It catalyses the reaction (6R)-5,10-methenyltetrahydrofolate + H2O = (6R)-10-formyltetrahydrofolate + H(+). It participates in one-carbon metabolism; tetrahydrofolate interconversion. Its function is as follows. Catalyzes the oxidation of 5,10-methylenetetrahydrofolate to 5,10-methenyltetrahydrofolate and then the hydrolysis of 5,10-methenyltetrahydrofolate to 10-formyltetrahydrofolate. This is Bifunctional protein FolD from Macrococcus caseolyticus (strain JCSC5402) (Macrococcoides caseolyticum).